The chain runs to 243 residues: DNA repair protein RecO (243 aa).

Belongs to the RecO family.

Its function is as follows. Involved in DNA repair and RecF pathway recombination. This is DNA repair protein RecO from Beutenbergia cavernae (strain ATCC BAA-8 / DSM 12333 / CCUG 43141 / JCM 11478 / NBRC 16432 / NCIMB 13614 / HKI 0122).